A 680-amino-acid polypeptide reads, in one-letter code: DNA-directed RNA polymerase subunit beta' (680 aa).

Zn(2+)-binding residues include Cys-69, Cys-71, Cys-87, and Cys-90. Mg(2+) contacts are provided by Asp-489, Asp-491, and Asp-493.

It belongs to the RNA polymerase beta' chain family. RpoC1 subfamily. In plastids the minimal PEP RNA polymerase catalytic core is composed of four subunits: alpha, beta, beta', and beta''. When a (nuclear-encoded) sigma factor is associated with the core the holoenzyme is formed, which can initiate transcription. Requires Mg(2+) as cofactor. Zn(2+) is required as a cofactor.

The protein resides in the plastid. It localises to the chloroplast. The catalysed reaction is RNA(n) + a ribonucleoside 5'-triphosphate = RNA(n+1) + diphosphate. DNA-dependent RNA polymerase catalyzes the transcription of DNA into RNA using the four ribonucleoside triphosphates as substrates. In Amborella trichopoda, this protein is DNA-directed RNA polymerase subunit beta'.